Consider the following 362-residue polypeptide: DNA replication and repair protein RecF (362 aa).

Position 30 to 37 (30 to 37) interacts with ATP; the sequence is GLNAQGKS.

This sequence belongs to the RecF family.

It is found in the cytoplasm. In terms of biological role, the RecF protein is involved in DNA metabolism; it is required for DNA replication and normal SOS inducibility. RecF binds preferentially to single-stranded, linear DNA. It also seems to bind ATP. The chain is DNA replication and repair protein RecF from Thermoanaerobacter sp. (strain X514).